A 650-amino-acid polypeptide reads, in one-letter code: AP-1-like transcription factor YAP1 (650 aa).

A disordered region spans residues 1 to 89; the sequence is MSVSTAKRSL…AFRERKERKM (89 aa). 3 positions are modified to phosphoserine: Ser-9, Ser-14, and Ser-17. Composition is skewed to basic and acidic residues over residues 22–50, 58–68, and 80–89; these read EGSKSRHDEIENEHRRTGTRDGEDSEQPK, KKQDLDPETKQ, and AFRERKERKM. Short sequence motifs (bipartite nuclear localization signal) lie at residues 35-42 and 68-75; these read HRRTGTRD and QKRTAQNR. Residues 64 to 127 form the bZIP domain; it reads PETKQKRTAQ…ITLVNELKKY (64 aa). Residues 67 to 90 are basic motif; it reads KQKRTAQNRAAQRAFRERKERKMK. The tract at residues 92–120 is leucine-zipper; the sequence is LEKKVQSLESIQQQNEVEATFLRDQLITL. Disordered stretches follow at residues 149–169 and 183–251; these read HFSKNNVNHSNSEPIDTPNDD and QYPL…PNSS. Positions 150–162 are enriched in polar residues; it reads FSKNNVNHSNSEP. The residue at position 165 (Thr-165) is a Phosphothreonine. Residues 195 to 209 are compositionally biased toward polar residues; sequence SKNVGKQLPSPNDPS. Ser-204 is subject to Phosphoserine. Residues 220–378 are transcription activation 1; it reads QKKLSDATDS…YENSFSGFGR (159 aa). Low complexity predominate over residues 226–246; it reads ATDSSSATLDSLSNSNDVLNN. Residues 303–315 form a n-CRD region; it reads CSKMNQVCGTRQC. 5 disulfide bridges follow: Cys-303-Cys-598, Cys-310-Cys-629, Cys-598-Cys-620, Cys-598-Cys-629, and Cys-620-Cys-629. The residue at position 372 (Ser-372) is a Phosphoserine. The segment covering 392-414 has biased composition (low complexity); it reads DNSTGSTDSTGSTGNKNKKNNNN. 3 disordered regions span residues 392 to 419, 510 to 532, and 551 to 591; these read DNSTGSTDSTGSTGNKNKKNNNNSDDVL, LFGEFLEDDDDDKKAANMSDDES, and LQSV…VPSK. A transcription activation 2 region spans residues 430–537; that stretch reads NQVTNFFSPG…SDDESSLIKN (108 aa). Ser-528 is subject to Phosphoserine. Positions 551–570 are enriched in polar residues; that stretch reads LQSVPGNESEISQKNGSSLQ. Low complexity predominate over residues 571–580; sequence NADKINNGND. Residues 598–629 form a c-CRD region; that stretch reads CSEIWDRITTHPKYSDIDVDGLCSELMAKAKC. A Nuclear export signal motif is present at residues 614–621; that stretch reads IDVDGLCS.

Belongs to the bZIP family. YAP subfamily. Interacts independent of oxidation state in the cytoplasm with the karyopherin PSE1/KAP121 (and less strongly with KAP123). The reduced form of YAP1 interacts in the nucleus with the nuclear export protein CRM1, and in the cytoplasm with YBP1 and the peroxiredoxin HYR1/GPX3/ORP1. Interacts with RBG1. In terms of processing, depending on the oxidative stress inducing agent, YAP1 can undergo two distinct conformational changes, both involving disulfide bond formation, and both masking the nuclear export signal, thus abolishing nuclear export by CRM1/exportin 1. The disulfide stress-inducing agent diamide leads to the formation of one of three possible disulfide bonds in the c-CRD. Peroxide stress induces the formation of the HYR1/GPX3- and YBP1-dependent interdomain disulfide bond between Cys-303 and Cys-598 (causing nuclear localization of YAP1), and the possibly stabilizing bond between Cys-310 and Cys-629 (required for full activity of YAP1).

Its subcellular location is the nucleus. It localises to the cytoplasm. Its function is as follows. Transcription activator involved in oxidative stress response and redox homeostasis. Regulates the transcription of genes encoding antioxidant enzymes and components of the cellular thiol-reducing pathways, including the thioredoxin system (TRX2, TRR1), the glutaredoxin system (GSH1, GLR1), superoxide dismutase (SOD1, SOD2), glutathione peroxidase (GPX2), and thiol-specific peroxidases (TSA1, AHP1). The induction of some of these genes requires the cooperative action of both, YAP1 and SKN7. Preferentially binds to promoters with the core binding site 5'-TTA[CG]TAA-3'. Activity of the transcription factor is controlled through oxidation of specific cysteine residues resulting in the alteration of its subcellular location. Oxidative stress (as well as carbon stress, but not increased temperature, acidic pH, or ionic stress) induces nuclear accumulation and as a result YAP1 transcriptional activity. Activation by hydrogen peroxide or thiol-reactive chemicals elicit distinct adaptive gene responses. Nuclear export is restored when disulfide bonds are reduced by thioredoxin (TRX2), whose expression is controlled by YAP1, providing a mechanism for negative autoregulation. When overexpressed, YAP1 confers pleiotropic drug-resistance and increases cellular tolerance to cadmium, iron chelators and zinc. This is AP-1-like transcription factor YAP1 from Saccharomyces cerevisiae (strain ATCC 204508 / S288c) (Baker's yeast).